The following is a 104-amino-acid chain: ATP-dependent Clp protease adapter protein ClpS (104 aa).

This sequence belongs to the ClpS family. As to quaternary structure, binds to the N-terminal domain of the chaperone ClpA.

Functionally, involved in the modulation of the specificity of the ClpAP-mediated ATP-dependent protein degradation. This chain is ATP-dependent Clp protease adapter protein ClpS, found in Neisseria gonorrhoeae (strain ATCC 700825 / FA 1090).